The following is a 98-amino-acid chain: NADH-ubiquinone oxidoreductase chain 4L (98 aa).

3 helical membrane-spanning segments follow: residues 1–21 (MPFIYINVLLAYFMSLLGLLI), 29–49 (SLLCLEGMMLSLFIMATLMTL), and 61–81 (IVLLVFAACEAAVGLALLVLI).

This sequence belongs to the complex I subunit 4L family. In terms of assembly, core subunit of respiratory chain NADH dehydrogenase (Complex I) which is composed of 45 different subunits.

It localises to the mitochondrion inner membrane. It carries out the reaction a ubiquinone + NADH + 5 H(+)(in) = a ubiquinol + NAD(+) + 4 H(+)(out). Core subunit of the mitochondrial membrane respiratory chain NADH dehydrogenase (Complex I) which catalyzes electron transfer from NADH through the respiratory chain, using ubiquinone as an electron acceptor. Part of the enzyme membrane arm which is embedded in the lipid bilayer and involved in proton translocation. This Aotus trivirgatus (Three-striped night monkey) protein is NADH-ubiquinone oxidoreductase chain 4L (MT-ND4L).